A 106-amino-acid polypeptide reads, in one-letter code: NADH-quinone oxidoreductase subunit K (106 aa).

The next 3 membrane-spanning stretches (helical) occupy residues 9–29 (LGHY…GIFL), 35–55 (IVML…MVAF), and 70–90 (FILT…VIYF).

The protein belongs to the complex I subunit 4L family. NDH-1 is composed of 14 different subunits. Subunits NuoA, H, J, K, L, M, N constitute the membrane sector of the complex.

It is found in the cell inner membrane. The enzyme catalyses a quinone + NADH + 5 H(+)(in) = a quinol + NAD(+) + 4 H(+)(out). Functionally, NDH-1 shuttles electrons from NADH, via FMN and iron-sulfur (Fe-S) centers, to quinones in the respiratory chain. The immediate electron acceptor for the enzyme in this species is believed to be ubiquinone. Couples the redox reaction to proton translocation (for every two electrons transferred, four hydrogen ions are translocated across the cytoplasmic membrane), and thus conserves the redox energy in a proton gradient. The protein is NADH-quinone oxidoreductase subunit K of Granulibacter bethesdensis (strain ATCC BAA-1260 / CGDNIH1).